Reading from the N-terminus, the 111-residue chain is Large ribosomal subunit protein uL22 (111 aa).

It belongs to the universal ribosomal protein uL22 family. As to quaternary structure, part of the 50S ribosomal subunit.

Its function is as follows. This protein binds specifically to 23S rRNA; its binding is stimulated by other ribosomal proteins, e.g. L4, L17, and L20. It is important during the early stages of 50S assembly. It makes multiple contacts with different domains of the 23S rRNA in the assembled 50S subunit and ribosome. The globular domain of the protein is located near the polypeptide exit tunnel on the outside of the subunit, while an extended beta-hairpin is found that lines the wall of the exit tunnel in the center of the 70S ribosome. This Geotalea uraniireducens (strain Rf4) (Geobacter uraniireducens) protein is Large ribosomal subunit protein uL22.